Consider the following 80-residue polypeptide: Large ribosomal subunit protein bL31B (80 aa).

Belongs to the bacterial ribosomal protein bL31 family. Type B subfamily. As to quaternary structure, part of the 50S ribosomal subunit.

This is Large ribosomal subunit protein bL31B from Xanthomonas campestris pv. campestris (strain 8004).